A 1527-amino-acid polypeptide reads, in one-letter code: uncharacterized protein (1527 aa).

Coiled-coil stretches lie at residues 262–293 (NVEISRDKIKKLKDKNEIFNQLINEFGENINE), 699–751 (QQQQ…SEKL), 905–932 (NNLNIINNNQENNNNNNNDLKETIENQI), and 1217–1255 (KIISSELELEQQQQQQQQQQQQQQQQQQQQQQQQQQKSS). The tract at residues 683-734 (TNQEQEQDQQDQPPPPQQQQEQQQEQQQQQEQQQQQDQQQQDQQQDQQEKQQ) is disordered. Residues 700-728 (QQQEQQQEQQQQQEQQQQQDQQQQDQQQD) are compositionally biased toward low complexity.

This is an uncharacterized protein from Dictyostelium discoideum (Social amoeba).